Here is a 354-residue protein sequence, read N- to C-terminus: METEGWPALQPLLCLAWIATTLPIIVAALPIPAAAGGHLLRRLLSAFSSRGKTVRPSPASSSGSSSSKAKFTVPQKYFMHFYVVGVLATTILLLAIWFYAYMKMTPLLPESSSYSTIASHLVGSNSFSFGRVHSRTMGHKYHVWRTVFVLLLMEIQVLRRLYETEHVFHYSPSARMHIVGYLTGLFYYVAAPLSLASSCIPEAAEYLQGQVAEFIVKGRARMPDLVIDSSSLLQPLLKLGWTQWIGAVIFIWGSLHQIRCHAILGTLREHKDSDEYVIPCGDWFNRVSCPHYLAELVIYFGMLVASGGEDIPVWFLFVFVITNLSFAAVETHKWYLQKFEDYPRSRYAIIPFVC.

A run of 6 helical transmembrane segments spans residues 11–31 (PLLCLAWIATTLPIIVAALPI), 78–98 (FMHFYVVGVLATTILLLAIWF), 141–158 (YHVWRTVFVLLLMEIQVL), 176–196 (MHIVGYLTGLFYYVAAPLSLA), 235–255 (PLLKLGWTQWIGAVIFIWGSL), and 301–321 (GMLVASGGEDIPVWFLFVFVI).

This sequence belongs to the steroid 5-alpha reductase family. Polyprenal reductase subfamily.

The protein resides in the cell membrane. The catalysed reaction is a di-trans,poly-cis-dolichal + NADP(+) = a di-trans,poly-cis-polyprenal + NADPH + H(+). It participates in protein modification; protein glycosylation. Plays a key role in early steps of protein N-linked glycosylation by being involved in the conversion of polyprenol into dolichol. Acts as a polyprenal reductase that mediates the reduction of polyprenal into dolichal in a NADP-dependent mechanism. Dolichols are required for the synthesis of dolichol-linked monosaccharides and the oligosaccharide precursor used for N-glycosylation. This chain is Polyprenal reductase 1, found in Oryza sativa subsp. indica (Rice).